The chain runs to 414 residues: Probable serine/threonine-protein kinase PBL26 (414 aa).

Residue Cys-3 is the site of S-palmitoyl cysteine attachment. The segment covering 17 to 41 has biased composition (basic and acidic residues); sequence RDSDNSYRRNGEVTGRDNNKTHPEN. Residues 17–55 are disordered; it reads RDSDNSYRRNGEVTGRDNNKTHPENPKTVNEQNKNNDED. In terms of domain architecture, Protein kinase spans 79-356; the sequence is FRQECLIGEG…SDVVTALGFL (278 aa). ATP is bound by residues 85–93 and Lys-108; that span reads IGEGGFGRV. Phosphotyrosine is present on Tyr-153. Asp-206 functions as the Proton acceptor in the catalytic mechanism. Ser-240 is subject to Phosphoserine. At Thr-246 the chain carries Phosphothreonine. Position 254 is a phosphotyrosine (Tyr-254). Residues 364 to 394 form a disordered region; sequence ISVPHYDDPPQPSDETSVEDSVAAEERERAV.

Belongs to the protein kinase superfamily. Ser/Thr protein kinase family. Post-translationally, palmitoylation at Cys-3 and Cys-6 are required for plasma membrane location.

The protein resides in the cell membrane. The catalysed reaction is L-seryl-[protein] + ATP = O-phospho-L-seryl-[protein] + ADP + H(+). The enzyme catalyses L-threonyl-[protein] + ATP = O-phospho-L-threonyl-[protein] + ADP + H(+). Its function is as follows. May be involved in plant defense signaling. This chain is Probable serine/threonine-protein kinase PBL26, found in Arabidopsis thaliana (Mouse-ear cress).